A 292-amino-acid chain; its full sequence is Small ribosomal subunit protein uS3 (292 aa).

A KH type-2 domain is found at 39 to 110 (IRLEIMKFLK…KISIKIKEVK (72 aa)). Positions 247–268 (KANERQSRAALNKKDGLSKDET) are disordered.

The protein belongs to the universal ribosomal protein uS3 family. Part of the 30S ribosomal subunit. Forms a tight complex with proteins S10 and S14.

Functionally, binds the lower part of the 30S subunit head. Binds mRNA in the 70S ribosome, positioning it for translation. The polypeptide is Small ribosomal subunit protein uS3 (Borrelia garinii subsp. bavariensis (strain ATCC BAA-2496 / DSM 23469 / PBi) (Borreliella bavariensis)).